The primary structure comprises 137 residues: MSHHHHHHQASLVVAYLLLIFLGFFGVHRFYVGRTISGVVYLLTGGIFGIGYIVDFFLLPSLVCHYNNKHHDHTTVIVSPTPVVYQSGSQHYAPYQPQPYYAQQPIQPQQQQYYQQPYQQQQYQPQPYQPNSPQYQP.

The region spanning 9-57 is the TM2 domain; that stretch reads QASLVVAYLLLIFLGFFGVHRFYVGRTISGVVYLLTGGIFGIGYIVDFF. The next 2 helical transmembrane spans lie at 12-32 and 39-59; these read LVVA…RFYV and VVYL…FFLL. The tract at residues 106 to 137 is disordered; the sequence is IQPQQQQYYQQPYQQQQYQPQPYQPNSPQYQP.

It belongs to the TM2 family.

The protein localises to the membrane. This chain is TM2 domain-containing protein DDB_G0287015, found in Dictyostelium discoideum (Social amoeba).